We begin with the raw amino-acid sequence, 502 residues long: Membrane-bound lytic murein transglycosylase F (502 aa).

Residues 1–33 form the signal peptide; that stretch reads MSRFISTFRSSSAQLSIVLAVILATGCSQPTTL. The segment at 34–264 is non-LT domain; sequence QEIREEGVLH…QLAERFYGHL (231 aa). An LT domain region spans residues 265–502; the sequence is DRLNYVGART…PELRLIPPTL (238 aa). The active site involves Glu311. Residues 457 to 502 are disordered; sequence PSASGLEDQLAWLGDNEAGPEAPAKESQPDLRADLPPELRLIPPTL. A compositionally biased stretch (basic and acidic residues) spans 479–493; the sequence is PAKESQPDLRADLPP.

In the N-terminal section; belongs to the bacterial solute-binding protein 3 family. This sequence in the C-terminal section; belongs to the transglycosylase Slt family.

The protein resides in the cell outer membrane. It catalyses the reaction Exolytic cleavage of the (1-&gt;4)-beta-glycosidic linkage between N-acetylmuramic acid (MurNAc) and N-acetylglucosamine (GlcNAc) residues in peptidoglycan, from either the reducing or the non-reducing ends of the peptidoglycan chains, with concomitant formation of a 1,6-anhydrobond in the MurNAc residue.. Functionally, murein-degrading enzyme that degrades murein glycan strands and insoluble, high-molecular weight murein sacculi, with the concomitant formation of a 1,6-anhydromuramoyl product. Lytic transglycosylases (LTs) play an integral role in the metabolism of the peptidoglycan (PG) sacculus. Their lytic action creates space within the PG sacculus to allow for its expansion as well as for the insertion of various structures such as secretion systems and flagella. This chain is Membrane-bound lytic murein transglycosylase F, found in Marinobacter nauticus (strain ATCC 700491 / DSM 11845 / VT8) (Marinobacter aquaeolei).